A 288-amino-acid polypeptide reads, in one-letter code: Peptidyl-tRNA hydrolase, chloroplastic (288 aa).

The N-terminal 55 residues, 1-55, are a transit peptide targeting the chloroplast; sequence MKAVAFPAKIANLSFPSNCCSLFFRSPATFLSPALPCRKLTKGIRGLEGLMSQCL. TRNA is bound at residue tyrosine 107. Histidine 112 acts as the Proton acceptor in catalysis. The tRNA site is built by phenylalanine 157, asparagine 159, and asparagine 205.

Belongs to the PTH family. Monomer.

Its subcellular location is the plastid. It localises to the chloroplast stroma. It carries out the reaction an N-acyl-L-alpha-aminoacyl-tRNA + H2O = an N-acyl-L-amino acid + a tRNA + H(+). Its function is as follows. The natural substrate for this enzyme may be peptidyl-tRNAs which drop off the ribosome during protein synthesis. The sequence is that of Peptidyl-tRNA hydrolase, chloroplastic from Arabidopsis thaliana (Mouse-ear cress).